The sequence spans 325 residues: Protease HtpX homolog (325 aa).

Residues 20–40 (IGYLLGGGGGMMIALVIAVAM) form a helical membrane-spanning segment. Zn(2+) is bound at residue H130. E131 is a catalytic residue. H134 contributes to the Zn(2+) binding site. 2 helical membrane-spanning segments follow: residues 145-165 (IVAT…FLGG) and 173-193 (VMGV…AMIV). E202 is a Zn(2+) binding site. Residues 288 to 325 (AMTARAAAPSQNSGPWGQRSDNAGGNSNGGSRYRGPWS) are disordered. The segment covering 306–325 (RSDNAGGNSNGGSRYRGPWS) has biased composition (low complexity).

The protein belongs to the peptidase M48B family. Zn(2+) serves as cofactor.

The protein localises to the cell inner membrane. The polypeptide is Protease HtpX homolog (Brucella suis (strain ATCC 23445 / NCTC 10510)).